The following is a 393-amino-acid chain: MFRLYVLVMGVSAFTLQPAAHTGAARSCPVRGRHYKREFRLEGEPVALRCPQVPYQLWASVSPHINLTWHKNDSARMVPGEEETRMWAQDGALWLLPALQEDSGTYICTTRNASYCDKVSIELRVFENTDASLPFISYPQILTLSTFGVLVCPDLREFTRDKTDGKIQWYKDFLPLDKDNEKFLSVRGTTHLLVHDVALEDAGYYRCVLTFAHEGQQYNITRNIELRIKKKKEETIPVIISPLKTISASLGSRLTIPCKVFLGTGTPLTTMLWWTANDTHVESAYPGGRVTEGPRQEYSENNENYIEVPLIFDPVTRKDLNMVFKCFVRNTMGFQTLRTTVKEPPPTFSWGIVLAPLALAFLVLGGIWMHRRCKHRTGKADGLTVLRPHHQDF.

Residues 1 to 13 (MFRLYVLVMGVSA) form the signal peptide. Residues 14-347 (FTLQPAAHTG…RTTVKEPPPT (334 aa)) are Extracellular-facing. 3 cysteine pairs are disulfide-bonded: Cys-28–Cys-116, Cys-50–Cys-108, and Cys-152–Cys-207. 3 consecutive Ig-like C2-type domains span residues 29 to 120 (PVRG…DKVS), 134 to 221 (PFIS…YNIT), and 237 to 342 (PVII…TTVK). Residues Asn-66, Asn-72, and Asn-112 are each glycosylated (N-linked (GlcNAc...) asparagine). N-linked (GlcNAc...) asparagine glycans are attached at residues Asn-219 and Asn-277. Cys-258 and Cys-326 are disulfide-bonded. A helical transmembrane segment spans residues 348-368 (FSWGIVLAPLALAFLVLGGIW). At 369-393 (MHRRCKHRTGKADGLTVLRPHHQDF) the chain is on the cytoplasmic side.

It belongs to the interleukin-1 receptor family. In terms of assembly, forms a non-signaling receptor complex consisting of IL1R2 and IL1RAP. In terms of processing, a soluble form (sIL1R2) can also be produced by proteolytic cleavage at the cell surface (shedding) involving a metalloproteinase.

The protein resides in the secreted. The protein localises to the cell membrane. Its function is as follows. Non-signaling receptor for IL1A, IL1B and IL1RN. Reduces IL1B activities. Serves as a decoy receptor by competitive binding to IL1B and preventing its binding to IL1R1. Also modulates cellular response through non-signaling association with IL1RAP after binding to IL1B. IL1R2 (membrane and secreted forms) preferentially binds IL1B and poorly IL1A and IL1RN. The secreted IL1R2 recruits secreted IL1RAP with high affinity; this complex formation may be the dominant mechanism for neutralization of IL1B by secreted/soluble receptors. This chain is Interleukin-1 receptor type 2 (IL1R2), found in Chlorocebus aethiops (Green monkey).